Reading from the N-terminus, the 177-residue chain is uncharacterized protein (177 aa).

This is an uncharacterized protein from Grapevine virus A (isolate Is 151) (GVA).